Here is a 368-residue protein sequence, read N- to C-terminus: Probable dual-specificity RNA methyltransferase RlmN (368 aa).

Glu-100 (proton acceptor) is an active-site residue. The 239-residue stretch at 106-344 (QHYGLSVCVT…CVVRQEHGTD (239 aa)) folds into the Radical SAM core domain. A disulfide bridge connects residues Cys-113 and Cys-349. The [4Fe-4S] cluster site is built by Cys-120, Cys-124, and Cys-127. S-adenosyl-L-methionine contacts are provided by residues 172 to 173 (GE), Ser-204, 227 to 229 (SLH), and Asn-305. The S-methylcysteine intermediate role is filled by Cys-349.

It belongs to the radical SAM superfamily. RlmN family. Requires [4Fe-4S] cluster as cofactor.

The protein localises to the cytoplasm. It carries out the reaction adenosine(2503) in 23S rRNA + 2 reduced [2Fe-2S]-[ferredoxin] + 2 S-adenosyl-L-methionine = 2-methyladenosine(2503) in 23S rRNA + 5'-deoxyadenosine + L-methionine + 2 oxidized [2Fe-2S]-[ferredoxin] + S-adenosyl-L-homocysteine. The catalysed reaction is adenosine(37) in tRNA + 2 reduced [2Fe-2S]-[ferredoxin] + 2 S-adenosyl-L-methionine = 2-methyladenosine(37) in tRNA + 5'-deoxyadenosine + L-methionine + 2 oxidized [2Fe-2S]-[ferredoxin] + S-adenosyl-L-homocysteine. Its function is as follows. Specifically methylates position 2 of adenine 2503 in 23S rRNA and position 2 of adenine 37 in tRNAs. This chain is Probable dual-specificity RNA methyltransferase RlmN, found in Streptococcus agalactiae serotype Ia (strain ATCC 27591 / A909 / CDC SS700).